Reading from the N-terminus, the 585-residue chain is MRKTKIVCTIGPASESEEMIEKLINAGMNVARLNFSHGSHEEHKGRIDTIRKVAKRLDKIVAILLDTKGPEIRTHNMKDGIIELERGNEVIVSMNEVEGTPEKFSVTYENLINDVQVGSYILLDDGLIELQVKDIDHAKKEVKCDILNSGELKNKKGVNLPGVRVSLPGITEKDAEDIRFGIKENVDFIAASFVRRPSDVLEIREILEEQKANISVFPKIENQEGIDNIAEILEVSDGLMVARGDMGVEIPPEKVPMVQKDLIRQCNKLGKPVITATQMLDSMQRNPRATRAEASDVANAIYDGTDAVMLSGETAAGLYPEEAVKTMRNIAVSAEAAQDYKKLLSDRTKLVETSLVNAIGISVAHTALNLNVKAIVAATESGSTARTISKYRPHSDIIAVTPSEETARQCSIVWGVQPVVKKGRKSTDALLNNAVATAVETGRVSNGDLIIITAGVPTGETGTTNMMKIHLVGDEIANGQGIGRGSVVGTTLVAETVKDLEGKDLSDKVIVTNSIDETFVPYVEKALGLITEENGITSPSAIVGLEKGIPTVVGVEKAVKNISNNMLVTIDAAQGKIFEGYANVL.

Residue R32 coordinates substrate. Residues N34, S36, D66, and T67 each coordinate K(+). Residue 34 to 37 (NFSH) coordinates ATP. 2 residues coordinate ATP: R73 and K156. E221 is a Mg(2+) binding site. The substrate site is built by G244, D245, and T277. D245 serves as a coordination point for Mg(2+).

Belongs to the pyruvate kinase family. It in the C-terminal section; belongs to the PEP-utilizing enzyme family. Mg(2+) is required as a cofactor. It depends on K(+) as a cofactor.

The catalysed reaction is pyruvate + ATP = phosphoenolpyruvate + ADP + H(+). Its pathway is carbohydrate degradation; glycolysis; pyruvate from D-glyceraldehyde 3-phosphate: step 5/5. This is Pyruvate kinase (pyk) from Staphylococcus aureus (strain USA300).